Reading from the N-terminus, the 225-residue chain is Small ribosomal subunit protein uS3 (225 aa).

Residues 18–87 enclose the KH type-2 domain; that stretch reads VDEYLAKQFY…NPQITVTSVE (70 aa).

This sequence belongs to the universal ribosomal protein uS3 family. As to quaternary structure, part of the 30S ribosomal subunit.

In terms of biological role, binds the lower part of the 30S subunit head. This Sulfurisphaera tokodaii (strain DSM 16993 / JCM 10545 / NBRC 100140 / 7) (Sulfolobus tokodaii) protein is Small ribosomal subunit protein uS3.